A 221-amino-acid chain; its full sequence is Josephin-like protein (221 aa).

A disordered region spans residues methionine 1–histidine 37. Residues leucine 9 to glycine 20 are compositionally biased toward low complexity. The region spanning proline 36–tryptophan 214 is the Josephin domain. Residue cysteine 49 is the Nucleophile of the active site. The active-site Proton acceptor is histidine 152.

It catalyses the reaction Thiol-dependent hydrolysis of ester, thioester, amide, peptide and isopeptide bonds formed by the C-terminal Gly of ubiquitin (a 76-residue protein attached to proteins as an intracellular targeting signal).. Functionally, may act as a deubiquitinating enzyme. In Drosophila melanogaster (Fruit fly), this protein is Josephin-like protein.